The primary structure comprises 1790 residues: Vitellogenin (1790 aa).

The signal sequence occupies residues 1–19 (MWSTVALCLLVGLSYVSSS). Residues 23–799 (WKDNTEYVYS…SAESSFPKIM (777 aa)) form the Vitellogenin domain. Residues Asn219 and Asn297 are each glycosylated (N-linked (GlcNAc...) asparagine). A compositionally biased stretch (acidic residues) spans 342-353 (LMEDSSSEESSE). The interval 342–400 (LMEDSSSEESSEQEMTHRRFRRSANSLTKQWRESSEEWNQQQQQPRPQLTRAPHSPLLP) is disordered. The segment covering 378–389 (EWNQQQQQPRPQ) has biased composition (low complexity). 9 N-linked (GlcNAc...) asparagine glycosylation sites follow: Asn554, Asn573, Asn893, Asn1345, Asn1416, Asn1430, Asn1480, Asn1699, and Asn1735. The 210-residue stretch at 1466–1675 (PTCVIDQTTA…SYQVEKGQQW (210 aa)) folds into the VWFD domain. Residues Cys1468 and Cys1638 are joined by a disulfide bond.

The protein resides in the secreted. In terms of biological role, precursor of the egg-yolk proteins that are sources of nutrients during embryonic development. The polypeptide is Vitellogenin (VTG) (Anthonomus grandis (Mexican cotton boll weevil)).